The following is a 1070-amino-acid chain: DNA-directed RNA polymerase subunit beta (1070 aa).

Belongs to the RNA polymerase beta chain family. As to quaternary structure, in plastids the minimal PEP RNA polymerase catalytic core is composed of four subunits: alpha, beta, beta', and beta''. When a (nuclear-encoded) sigma factor is associated with the core the holoenzyme is formed, which can initiate transcription.

Its subcellular location is the plastid. It is found in the chloroplast. It carries out the reaction RNA(n) + a ribonucleoside 5'-triphosphate = RNA(n+1) + diphosphate. DNA-dependent RNA polymerase catalyzes the transcription of DNA into RNA using the four ribonucleoside triphosphates as substrates. This is DNA-directed RNA polymerase subunit beta from Morus indica (Mulberry).